Consider the following 196-residue polypeptide: Endonuclease V (196 aa).

Mg(2+) is bound by residues aspartate 37 and aspartate 98.

This sequence belongs to the endonuclease V family. Requires Mg(2+) as cofactor.

The protein resides in the cytoplasm. The catalysed reaction is Endonucleolytic cleavage at apurinic or apyrimidinic sites to products with a 5'-phosphate.. DNA repair enzyme involved in the repair of deaminated bases. Selectively cleaves double-stranded DNA at the second phosphodiester bond 3' to a deoxyinosine leaving behind the intact lesion on the nicked DNA. This is Endonuclease V from Sulfurisphaera tokodaii (strain DSM 16993 / JCM 10545 / NBRC 100140 / 7) (Sulfolobus tokodaii).